A 382-amino-acid polypeptide reads, in one-letter code: MNLKEKTRALFAEIFGYPATHTIQAPGRVNLIGEHTDYNDGFVLPCAIDYQTVISCAPRDDRTVRVIAADYDNQVDEFSLDAPIVTHDSQQWSNYVRGVVKHLQQRNNAFGGVDMVISGNVPQGAGLSSSASLEVAVGTVFQQLYHLPLDGAQIALNGQEAENQFVGCNCGIMDQLISALGKKDHALLIDCRTLGAKAVSMPKGVAVVIINSNFKRTLVGSEYNTRREQCETGARFFQQPALRDVSLEAFNAVASELDPVVAKRVRHVLSENARTVEAASALEKGDLQRMGQLMAESHASMRDDFEITVPQIDTLVDIVKATIGDQGGVRMTGGGFGGCVVALIPEDLVPAVRQAVAQQYEAKTGIKETFYVCKPSQGAGQC.

A substrate-binding site is contributed by 34 to 37 (EHTD). Position 124–130 (124–130 (GAGLSSS)) interacts with ATP. 2 residues coordinate Mg(2+): Ser-130 and Glu-162. The active-site Proton acceptor is Asp-174. Substrate is bound at residue Tyr-223.

The protein belongs to the GHMP kinase family. GalK subfamily.

It localises to the cytoplasm. The catalysed reaction is alpha-D-galactose + ATP = alpha-D-galactose 1-phosphate + ADP + H(+). It functions in the pathway carbohydrate metabolism; galactose metabolism. Catalyzes the transfer of the gamma-phosphate of ATP to D-galactose to form alpha-D-galactose-1-phosphate (Gal-1-P). This Salmonella heidelberg (strain SL476) protein is Galactokinase.